The following is a 24-amino-acid chain: Brevinin-1CSa (24 aa).

A disulfide bridge connects residues Cys18 and Cys24.

As to expression, expressed by the skin glands.

It localises to the secreted. It is found in the target cell membrane. Its function is as follows. Antibacterial peptide. Has activity against the Gram-positive bacterium S.aureus (MIC=2 uM) and the Gram-negative bacterium E.coli (MIC=32 uM). Has a strong hemolytic activity (LC(50)=5 uM). The protein is Brevinin-1CSa of Rana cascadae (Cascades frog).